The sequence spans 466 residues: 55 kDa erythrocyte membrane protein (466 aa).

Residue threonine 2 is modified to N-acetylthreonine. The residue at position 19 (serine 19) is a Phosphoserine. Threonine 49 carries the post-translational modification Phosphothreonine. 2 positions are modified to phosphoserine: serine 57 and serine 110. Positions leucine 71–glutamine 152 constitute a PDZ domain. One can recognise an SH3 domain in the interval alanine 158–valine 228. Serine 243 bears the Phosphoserine mark. The interaction with PALS1 stretch occupies residues valine 268–tyrosine 466. The 170-residue stretch at arginine 282–aspartate 451 folds into the Guanylate kinase-like domain.

Belongs to the MAGUK family. In terms of assembly, heterodimer with PALS1. Interacts with DLG5 and NF2. Interacts (via guanylate kinase-like domain) with WHRN (via third PDZ domain). Interacts with PALS1. In terms of processing, palmitoylated.

It localises to the cell membrane. It is found in the cell projection. The protein resides in the stereocilium. Its function is as follows. Essential regulator of neutrophil polarity. Regulates neutrophil polarization by regulating AKT1 phosphorylation through a mechanism that is independent of PIK3CG activity. The chain is 55 kDa erythrocyte membrane protein (MPP1) from Bos taurus (Bovine).